The primary structure comprises 142 residues: 3-hydroxyacyl-[acyl-carrier-protein] dehydratase FabZ (142 aa).

H47 is a catalytic residue.

The protein belongs to the thioester dehydratase family. FabZ subfamily.

It localises to the cytoplasm. It catalyses the reaction a (3R)-hydroxyacyl-[ACP] = a (2E)-enoyl-[ACP] + H2O. In terms of biological role, involved in unsaturated fatty acids biosynthesis. Catalyzes the dehydration of short chain beta-hydroxyacyl-ACPs and long chain saturated and unsaturated beta-hydroxyacyl-ACPs. This Thermoanaerobacter sp. (strain X514) protein is 3-hydroxyacyl-[acyl-carrier-protein] dehydratase FabZ.